The chain runs to 102 residues: Citrate lyase acyl carrier protein (102 aa).

The residue at position 14 (Ser14) is an O-(phosphoribosyl dephospho-coenzyme A)serine.

It belongs to the CitD family. In terms of assembly, oligomer with a subunit composition of (alpha,beta,gamma)6.

It is found in the cytoplasm. Covalent carrier of the coenzyme of citrate lyase. This chain is Citrate lyase acyl carrier protein, found in Streptococcus equi subsp. zooepidemicus (strain H70).